Consider the following 3994-residue polypeptide: Hybrid PKS-NRPs synthetase opdA (3994 aa).

The 437-residue stretch at 6 to 442 folds into the Ketosynthase family 3 (KS3) domain; sequence PEPIAIVGSS…GTNSHVILES (437 aa). Active-site for beta-ketoacyl synthase activity residues include Cys-179, His-316, and His-362. Residues 559-881 form a malonyl-CoA:ACP transacylase (MAT) domain region; the sequence is VFTGQGAQWP…LKRDSNDVEA (323 aa). Positions 951 to 1085 are N-terminal hotdog fold; it reads HELLGRRTHD…GRLIIHLGET (135 aa). The segment at 951–1251 is dehydratase (DH) domain; that stretch reads HELLGRRTHD…SVKPMAPPTA (301 aa). Residues 951–1252 form the PKS/mFAS DH domain; it reads HELLGRRTHD…VKPMAPPTAE (302 aa). The active-site Proton acceptor; for dehydratase activity is the His-983. The interval 1100 to 1252 is C-terminal hotdog fold; sequence LLSVDTDEGY…VKPMAPPTAE (153 aa). The active-site Proton donor; for dehydratase activity is the Asp-1159. A methyltransferase (MT) domain region spans residues 1292–1593; sequence DRVVLYYVQR…VDLAFHDLPD (302 aa). The segment at 2123–2297 is ketoreductase (KR) domain; the sequence is TYLMVGMAGG…ASIIHIGFVT (175 aa). Positions 2406-2483 constitute a Carrier 1 domain; it reads EAVEITQKAF…QICTNAAKQL (78 aa). Ser-2443 is subject to O-(pantetheine 4'-phosphoryl)serine. The interval 2486 to 2575 is disordered; sequence QKGGQEPSEQ…FDPDDRDYNP (90 aa). Polar residues-rich tracts occupy residues 2505-2514 and 2522-2546; these read LHVSQGSLHT and TETSSVGGTENTPLTSASSSPSVTD. Over residues 2547–2556 the composition is skewed to basic and acidic residues; it reads TVEKRDKGDI. Residues 2557 to 2570 are compositionally biased toward acidic residues; it reads SVDEGPNEQFDPDD. The condensation (C) domain stretch occupies residues 2582 to 3007; it reads RLSSGQSRIY…SNTYMTVAKI (426 aa). The adenylation (A) (KR) domain stretch occupies residues 3043–3436; it reads HETNREDLAI…DGSLVFLGRL (394 aa). Residues 3553–3630 enclose the Carrier 2 domain; the sequence is PKLSLRQSEL…KMTMLVDLER (78 aa). Ser-3590 carries the post-translational modification O-(pantetheine 4'-phosphoryl)serine. The tract at residues 3679 to 3895 is reductase (RED) domain; the sequence is TGATGFLGGS…FDFKKVEEVA (217 aa).

In the C-terminal section; belongs to the NRP synthetase family. Requires pantetheine 4'-phosphate as cofactor.

It participates in secondary metabolite biosynthesis. Functionally, hybrid PKS-NRPS synthetase; part of the gene cluster that mediates the biosynthesis of oxopyrrolidines, polyketide-amino acid hybrid compounds with feature structures of tetramic acid. The polyketide chain is first assembled by the highly reducing PKS module of opdA using acetyl-CoA as the starter unit and five malonyl-CoA as the extender units. OpdC acts as trans-acting enoyl reductase and reduces the terminal alkenyl to alkane. The 17R in oxopyrrolidine A and 15R, 17S in oxopyrrolidine B are generated by non-stereospecific catalysis of the ketoreductase (KR) domain and enoyl reductases. Then the polyketides with specific configurations are transferred to the NRPS module of opdA and linked to L-tyrosine to form an amide bond. Finally, the oxopyrrolidines are offloaded through a Dieckmann cyclization catalyzed by the terminal D domain to give a tetramic acid moiety. The chain is Hybrid PKS-NRPs synthetase opdA from Penicillium oxalicum (strain 114-2 / CGMCC 5302) (Penicillium decumbens).